The primary structure comprises 208 residues: Large ribosomal subunit protein bL25 (208 aa).

The protein belongs to the bacterial ribosomal protein bL25 family. CTC subfamily. Part of the 50S ribosomal subunit; part of the 5S rRNA/L5/L18/L25 subcomplex. Contacts the 5S rRNA. Binds to the 5S rRNA independently of L5 and L18.

In terms of biological role, this is one of the proteins that binds to the 5S RNA in the ribosome where it forms part of the central protuberance. The sequence is that of Large ribosomal subunit protein bL25 from Burkholderia pseudomallei (strain K96243).